The primary structure comprises 157 residues: 2-C-methyl-D-erythritol 2,4-cyclodiphosphate synthase (157 aa).

2 residues coordinate a divalent metal cation: aspartate 8 and histidine 10. Residues 8-10 (DVH) and 34-35 (HS) each bind 4-CDP-2-C-methyl-D-erythritol 2-phosphate. Histidine 42 serves as a coordination point for a divalent metal cation. 4-CDP-2-C-methyl-D-erythritol 2-phosphate contacts are provided by residues 56–58 (DIG), 132–135 (TTNE), and arginine 142.

This sequence belongs to the IspF family. In terms of assembly, homotrimer. Requires a divalent metal cation as cofactor.

The catalysed reaction is 4-CDP-2-C-methyl-D-erythritol 2-phosphate = 2-C-methyl-D-erythritol 2,4-cyclic diphosphate + CMP. Its pathway is isoprenoid biosynthesis; isopentenyl diphosphate biosynthesis via DXP pathway; isopentenyl diphosphate from 1-deoxy-D-xylulose 5-phosphate: step 4/6. Involved in the biosynthesis of isopentenyl diphosphate (IPP) and dimethylallyl diphosphate (DMAPP), two major building blocks of isoprenoid compounds. Catalyzes the conversion of 4-diphosphocytidyl-2-C-methyl-D-erythritol 2-phosphate (CDP-ME2P) to 2-C-methyl-D-erythritol 2,4-cyclodiphosphate (ME-CPP) with a corresponding release of cytidine 5-monophosphate (CMP). This chain is 2-C-methyl-D-erythritol 2,4-cyclodiphosphate synthase, found in Chlorobium luteolum (strain DSM 273 / BCRC 81028 / 2530) (Pelodictyon luteolum).